The chain runs to 142 residues: Ribosome-binding factor A (142 aa).

The disordered stretch occupies residues 119–142 (ETLGEVQSESDQPTTDETTTVNKT). Residues 123-142 (EVQSESDQPTTDETTTVNKT) are compositionally biased toward polar residues.

The protein belongs to the RbfA family. As to quaternary structure, monomer. Binds 30S ribosomal subunits, but not 50S ribosomal subunits or 70S ribosomes.

It is found in the cytoplasm. Functionally, one of several proteins that assist in the late maturation steps of the functional core of the 30S ribosomal subunit. Associates with free 30S ribosomal subunits (but not with 30S subunits that are part of 70S ribosomes or polysomes). Required for efficient processing of 16S rRNA. May interact with the 5'-terminal helix region of 16S rRNA. The sequence is that of Ribosome-binding factor A from Prochlorococcus marinus (strain MIT 9303).